Reading from the N-terminus, the 239-residue chain is Lactate utilization protein A (239 aa).

It belongs to the LutA/YkgE family.

Functionally, is involved in L-lactate degradation and allows cells to grow with lactate as the sole carbon source. This is Lactate utilization protein A from Geobacillus kaustophilus (strain HTA426).